Consider the following 322-residue polypeptide: MRFKGLDLNLLVALDRLMTERKLTAAARAINLSQPAMSAAISRWRDYFRDDLFIIQRRELNPTPAAEPLAPVVREALLHIQLSVIAWDPINPAEFDRRFRIILSDFMALVFFEKIIVRLAREAPGVSFKLLPLDDDPEELLRRGDVDFLILPDLFMSGAHRKARLFEERLVCVGCSTNEQLQGKLFLEQYMSMGHVAAKFGRGLKPSVEQWLLLQQGLKRRIELVVPGFNLIPPLLSGTNRIATIPLRLVKHYEQTIPLRIIEHPLPLLSFTEAVQWPALHNSDPGNIWMREIMIQEASRHWNPRPKVVRLKRPRSFHSRSS.

An HTH lysR-type domain is found at 6-63 (LDLNLLVALDRLMTERKLTAAARAINLSQPAMSAAISRWRDYFRDDLFIIQRRELNPT). The segment at residues 23–42 (LTAAARAINLSQPAMSAAIS) is a DNA-binding region (H-T-H motif).

It belongs to the LysR transcriptional regulatory family.

NodD regulates the expression of the nodABCFE genes which encode other nodulation proteins. NodD is also a negative regulator of its own expression. Binds flavonoids as inducers. The protein is Nodulation protein D (nodD) of Rhizobium leguminosarum.